Consider the following 348-residue polypeptide: Protein RecA (348 aa).

64 to 71 (GPESSGKT) serves as a coordination point for ATP. Residues 325–335 (YEIDGSNKEPL) are compositionally biased toward basic and acidic residues. Residues 325–348 (YEIDGSNKEPLDEGEETLSLLDDE) form a disordered region. The segment covering 336–348 (DEGEETLSLLDDE) has biased composition (acidic residues).

It belongs to the RecA family.

The protein localises to the cytoplasm. Can catalyze the hydrolysis of ATP in the presence of single-stranded DNA, the ATP-dependent uptake of single-stranded DNA by duplex DNA, and the ATP-dependent hybridization of homologous single-stranded DNAs. It interacts with LexA causing its activation and leading to its autocatalytic cleavage. The chain is Protein RecA from Listeria monocytogenes serotype 4b (strain CLIP80459).